Consider the following 298-residue polypeptide: MLENLETEKSNPKTQNLDEMDIHEILRIINQEDATIALSIAENLENIENVVANCISAIKNHGRIIYVGAGTSGRVAVVDAVETVPTFGIDSGIFLPLIAGGEKAFFQATEHVEDYEESGKKDLEKNNVRSEDYVIGITASGRTPYVKGALSLAKEIGCKTALICNVKNPELMEFSDIVVSLRTGPEVIAGSTRMKAGTAQKMVLNMISTVTMIKLGKTFKNYMVDVKIMNQKLEERAVRIISEVTGLDKKTCKEYLIKADMKPKLAILMILSGKDKEFCIEALKKNEVLHEALKTLKN.

One can recognise an SIS domain in the interval 54–217 (CISAIKNHGR…STVTMIKLGK (164 aa)). Residue E82 is the Proton donor of the active site. E113 is an active-site residue.

It belongs to the GCKR-like family. MurNAc-6-P etherase subfamily. Homodimer.

The enzyme catalyses N-acetyl-D-muramate 6-phosphate + H2O = N-acetyl-D-glucosamine 6-phosphate + (R)-lactate. It participates in amino-sugar metabolism; N-acetylmuramate degradation. Functionally, specifically catalyzes the cleavage of the D-lactyl ether substituent of MurNAc 6-phosphate, producing GlcNAc 6-phosphate and D-lactate. The protein is N-acetylmuramic acid 6-phosphate etherase of Petrotoga mobilis (strain DSM 10674 / SJ95).